A 248-amino-acid polypeptide reads, in one-letter code: 2,3-bisphosphoglycerate-dependent phosphoglycerate mutase (248 aa).

Substrate contacts are provided by residues 8–15 (RHGESQWN), 21–22 (TG), R60, 87–90 (ERHY), K98, 114–115 (RR), and 183–184 (GN). The Tele-phosphohistidine intermediate role is filled by H9. The Proton donor/acceptor role is filled by E87.

Belongs to the phosphoglycerate mutase family. BPG-dependent PGAM subfamily. As to quaternary structure, homodimer.

The catalysed reaction is (2R)-2-phosphoglycerate = (2R)-3-phosphoglycerate. The protein operates within carbohydrate degradation; glycolysis; pyruvate from D-glyceraldehyde 3-phosphate: step 3/5. In terms of biological role, catalyzes the interconversion of 2-phosphoglycerate and 3-phosphoglycerate. The protein is 2,3-bisphosphoglycerate-dependent phosphoglycerate mutase of Teredinibacter turnerae (strain ATCC 39867 / T7901).